The chain runs to 246 residues: MEEEEVYIDVNSPVALKVHPSKDLMKFLLSENANLKMASFFTEFEKGFMDIIVGIKIRYKDLSRELLKFVVLNIGNLANEYGKEIRAVFGGLSFKEYLEREKYSYPYSGEKLFQEKISINGTLLLLEVYVKEENYTLICREEGSSNYLIKAIRKVEGPYEALKILEKAKESIKNRDFVSLRKLFSPYEVDFFELYSVFLKGKDTTKLKKLEKEIHELPYMLINGKITYEEYKKRIREIEKEIGLSE.

A coiled-coil region spans residues 204–243 (TTKLKKLEKEIHELPYMLINGKITYEEYKKRIREIEKEIG).

This is an uncharacterized protein from Aquifex aeolicus (strain VF5).